Consider the following 875-residue polypeptide: MNYPGHGSPRSSERNGGRGGDGAAWELGSDTEPAFGGSVCRFDHLPVGEPGDDEVPLALLRGEPGLHLAPGAEDHNHHLALDPCLSDDNYDFSSAESGSSLRYYSEGESGGGGSSSSLHPPQQPLVPSNSGGGGAAGGGPGERKRTRPGGAAARHRYEVVTELGPEEVRWFYKEDKKTWKPFIGYDSLRIELAFRTLLQATGARARAQDPDGDHVCGPASPAGPASSSVEDEDEDRVCGFCPRIAGHGREMEELVNIERVCVRGGLYEVDVTQGECYPVYWNQSDKIPVMRGQWFIDGTWQPLEEEESNLIEQEHLSRFRGQQMQESFDIEVSKPIDGKDAIHSFKLSRNHVDWHSVDEVYLYSDATTSKIARTVTQKLGFSKASSSGTRLHRGYVEEATLEDKPSQTTHIVFVVHGIGQKMDQGRIIKNTAMMREAARKIEERHFSNHATHVEFLPVEWRSKLTLDGDTVDSITPDKVRGLRDMLNSSAMDIMYYTSPLYRDELVKGLQQELNRLYSLFCSRNPNFEEKGGKVSIVSHSLGCVITYDIMTGWNPVRLYEQLLQKEEELPDERWMSYEERHLLDELYITKRRLREIEERLHGLKASSMTQTPALKFKVENFFCMGSPLAVFLALRGIRPGNTGSQDHILPREICNRLLNIFHPTDPVAYRLEPLILKHYSNISPVQIHWYNTSNPLPYEYMKPSFLHPAKDPTSISENEGISTIPSPVTSPVLSRRHYGESITNIGKASILGAASIGKGLGGMLFSRFGRSSASQPSETSRDSIEDEKKPVASPPMTTVATQTLPHSSSGFLDSALELDHRIDFELREGLVESRYWSAVTSHTAYWSSLDVALFLLTFMYKHEHDNNVKPSLDPV.

Disordered regions lie at residues methionine 1–aspartate 30, leucine 101–alanine 153, and arginine 206–aspartate 231. A phosphoserine mark is found at serine 8 and serine 11. The segment covering serine 130 to proline 140 has biased composition (gly residues). The span at glycine 217–serine 228 shows a compositional bias: low complexity. Serine 540 is an active-site residue. The DDHD domain maps to leucine 614–lysine 861. Serine 726 is subject to Phosphoserine. A disordered region spans residues arginine 770–leucine 804. Over residues threonine 779–proline 790 the composition is skewed to basic and acidic residues. The segment covering proline 795 to leucine 804 has biased composition (polar residues).

Belongs to the PA-PLA1 family. As to quaternary structure, forms homooligomers and, to a much smaller extent, heterooligomers with DDHD2. Interacts with SEC23A and SEC24C. In terms of tissue distribution, expressed in mature testis.

It localises to the cytoplasm. It catalyses the reaction a 1,2-diacyl-sn-glycero-3-phosphate + H2O = a 2-acyl-sn-glycerol 3-phosphate + a fatty acid + H(+). The catalysed reaction is a 1,2-diacyl-sn-glycero-3-phospho-(1D-myo-inositol) + H2O = a 2-acyl-sn-glycero-3-phospho-D-myo-inositol + a fatty acid + H(+). It carries out the reaction 1-octadecanoyl-2-(5Z,8Z,11Z,14Z-eicosatetraenoyl)-sn-glycero-3-phospho-(1D-myo-inositol) + H2O = 2-(5Z,8Z,11Z,14Z-eicosatetraenoyl)-sn-glycero-3-phospho-(1D-myo-inositol) + octadecanoate + H(+). The enzyme catalyses a 1-acyl-2-(5Z,8Z,11Z,14Z-eicosatetraenoyl)-sn-glycero-3-phospho-(1D-myo-inositol) + H2O = 2-(5Z,8Z,11Z,14Z-eicosatetraenoyl)-sn-glycero-3-phospho-(1D-myo-inositol) + a fatty acid + H(+). It catalyses the reaction 1,2-dihexadecanoyl-sn-glycero-3-phospho-(1D-myo-inositol) + H2O = 2-hexadecanoyl-sn-glycero-3-phospho-(1D-myo-inositol) + hexadecanoate + H(+). The catalysed reaction is 1,2-di-(9Z-octadecenoyl)-sn-glycero-3-phosphate + H2O = 2-(9Z-octadecenoyl)-sn-glycero-3-phosphate + (9Z)-octadecenoate + H(+). It carries out the reaction a 1-acyl-2-(5Z,8Z,11Z,14Z)-eicosatetraenoyl-sn-glycero-3-phosphate + H2O = 2-(5Z,8Z,11Z,14Z-eicosatetraenoyl)-sn-glycero-3-phosphate + a fatty acid + H(+). The enzyme catalyses 1-hexadecanoyl-2-(9Z-octadecenoyl)-sn-glycero-3-phosphate + H2O = 2-(9Z-octadecenoyl)-sn-glycero-3-phosphate + hexadecanoate + H(+). It catalyses the reaction 1-hexadecanoyl-2-(9Z-octadecenoyl)-sn-glycero-3-phospho-L-serine + H2O = 2-(9Z-octadecenoyl)-sn-glycero-3-phospho-L-serine + hexadecanoate + H(+). The catalysed reaction is 1,2-di-(5Z,8Z,11Z,14Z)-eicosatetraenoyl-sn-glycero-3-phosphate + H2O = 2-(5Z,8Z,11Z,14Z-eicosatetraenoyl)-sn-glycero-3-phosphate + (5Z,8Z,11Z,14Z)-eicosatetraenoate + H(+). It carries out the reaction 1-octadecanoyl-2-(5Z,8Z,11Z,14Z-eicosatetraenoyl)-sn-glycero-3-phosphate + H2O = 2-(5Z,8Z,11Z,14Z-eicosatetraenoyl)-sn-glycero-3-phosphate + octadecanoate + H(+). The enzyme catalyses a 1,2-diacyl-sn-glycero-3-phosphocholine + H2O = a 2-acyl-sn-glycero-3-phosphocholine + a fatty acid + H(+). It catalyses the reaction a 1,2-diacyl-sn-glycero-3-phosphoethanolamine + H2O = a 2-acyl-sn-glycero-3-phosphoethanolamine + a fatty acid + H(+). The catalysed reaction is a 1,2-diacyl-sn-glycero-3-phospho-L-serine + H2O = a 2-acyl-sn-glycero-3-phospho-L-serine + a fatty acid + H(+). It carries out the reaction a 1,2-diacyl-sn-glycero-3-phospho-(1'-sn-glycerol) + H2O = 2-acyl-sn-glycero-3-phospho-(1'-sn-glycerol) + a fatty acid + H(+). The enzyme catalyses 1-hexadecanoyl-2-(9Z-octadecenoyl)-sn-glycero-3-phospho-(1'-sn-glycerol) + H2O = 2-(9Z-octadecenoyl)-sn-glycero-3-phospho-(1'-sn-glycerol) + hexadecanoate + H(+). It catalyses the reaction 1-acyl-2-(5Z,8Z,11Z,14Z-eicosatetraenoyl)-sn-glycero-3-phosphocholine + H2O = 2-(5Z,8Z,11Z,14Z)-eicosatetraenoyl-sn-glycero-3-phosphocholine + a fatty acid + H(+). The catalysed reaction is 1-acyl-2-(5Z,8Z,11Z,14Z)-eicosatetraenoyl-sn-glycero-3-phosphoethanolamine + H2O = 2-(5Z,8Z,11Z,14Z)-eicosatetraenoyl-sn-glycero-3-phosphoethanolamine + a fatty acid + H(+). It carries out the reaction 1-(9Z-octadecenoyl)-2-(7Z,10Z,13Z,16Z,19Z-docosapentaenoyl)-sn-glycero-3-phospho-1D-myo-inositol + H2O = 2-(7Z,10Z,13Z,16Z,19Z-docosapentaenoyl)-sn-glycero-3-phospho-1D-myo-inositol + (9Z)-octadecenoate + H(+). The enzyme catalyses 1-(9Z-octadecenoyl)-2-(5Z,8Z,11Z,14Z-eicosatetraenoyl)-sn-glycero-3-phospho-1D-myo-inositol + H2O = 2-(5Z,8Z,11Z,14Z-eicosatetraenoyl)-sn-glycero-3-phospho-(1D-myo-inositol) + (9Z)-octadecenoate + H(+). It catalyses the reaction 1,2-di-(9Z-octadecenoyl)-sn-glycero-3-phospho-1D-myo-inositol + H2O = 2-(9Z-octadecenoyl)-sn-glycero-3-phospho-1D-myo-inositol + (9Z)-octadecenoate + H(+). The catalysed reaction is 1-(9Z-octadecenoyl)-2-(8Z,11Z,14Z-eicosatrienoyl)-sn-glycero-3-phospho-1D-myo-inositol + H2O = 2-(8Z,11Z,14Z-eicosatrienoyl)-sn-glycero-3-phospho-1D-myo-inositol + (9Z)-octadecenoate + H(+). It carries out the reaction 1,2-di-(9Z-octadecenoyl)-sn-glycero-3-phosphocholine + H2O = (9Z-octadecenoyl)-sn-glycero-3-phosphocholine + (9Z)-octadecenoate + H(+). It functions in the pathway phospholipid metabolism; phosphatidylinositol metabolism. Its function is as follows. Phospholipase A1 (PLA1) that hydrolyzes ester bonds at the sn-1 position of glycerophospholipids producing a free fatty acid and a lysophospholipid. Prefers phosphatidate (1,2-diacyl-sn-glycero-3-phosphate, PA) as substrate in vitro, but can efficiently hydrolyze phosphatidylinositol (1,2-diacyl-sn-glycero-3-phospho-(1D-myo-inositol), PI), as well as a range of other glycerophospholipid substrates such as phosphatidylcholine (1,2-diacyl-sn-glycero-3-phosphocholine, PC), phosphatidylethanolamine (1,2-diacyl-sn-glycero-3-phosphoethanolamine, PE), phosphatidylserine (1,2-diacyl-sn-glycero-3-phospho-L-serine, PS) and phosphatidylglycerol (1,2-diacyl-sn-glycero-3-phospho-(1'-sn-glycerol), PG). Involved in the regulation of the endogenous content of polyunsaturated PI and PS lipids in the nervous system. Changes in these lipids extend to downstream metabolic products like PI phosphates PIP and PIP2, which play fundamental roles in cell biology. Regulates mitochondrial morphology. These dynamic changes may be due to PA hydrolysis at the mitochondrial surface. May play a regulatory role in spermatogenesis or sperm function. In Bos taurus (Bovine), this protein is Phospholipase DDHD1 (DDHD1).